Here is a 2030-residue protein sequence, read N- to C-terminus: Dedicator of cytokinesis protein 3 (2030 aa).

In terms of domain architecture, SH3 spans 6–67; that stretch reads EEEKYGVVIC…PANYIHLKKA (62 aa). Positions 421–599 constitute a C2 DOCK-type domain; sequence RNDLYLTLEK…ESFFISTQLS (179 aa). The 408-residue stretch at 1228-1635 folds into the DOCKER domain; it reads KSEINKEEMY…LYHEFPGLDK (408 aa). Disordered stretches follow at residues 1641–1662, 1734–1771, 1849–1927, and 1951–2030; these read SGTSTPRGNVLASHSPMSPESI, SSSQASPSSSSLSSTHSAPSQMITSAPSSARGSPSLPD, DTPP…ADED, and QPCR…RGEQ. Ser1658 carries the post-translational modification Phosphoserine. Low complexity predominate over residues 1734–1754; sequence SSSQASPSSSSLSSTHSAPSQ. Polar residues predominate over residues 1755–1765; it reads MITSAPSSARG. Residues 1880 to 1902 show a composition bias toward low complexity; that stretch reads GSNSTLSGSASSGVSSLSESNFG. Over residues 1967-1977 the composition is skewed to pro residues; that stretch reads PMDPPALPPKP. The SH3-binding signature appears at 1970-1976; the sequence is PPALPPK. Composition is skewed to basic and acidic residues over residues 1984–2001 and 2014–2030; these read ALEHDEGVLLREETERPR and AKEEQARMAWEHGRGEQ.

This sequence belongs to the DOCK family. Interacts with presenilin proteins PSEN1 and PSEN2. Interacts with CRK. In terms of tissue distribution, in normal brains, it is localized in the neuropil, and occasionally in the pyramidal cells, while in Alzheimer disease brains, it is associated with neurofibrillary tangles.

It is found in the cytoplasm. Functionally, potential guanine nucleotide exchange factor (GEF). GEF proteins activate some small GTPases by exchanging bound GDP for free GTP. Its interaction with presenilin proteins as well as its ability to stimulate Tau/MAPT phosphorylation suggest that it may be involved in Alzheimer disease. Ectopic expression in nerve cells decreases the secretion of amyloid-beta APBA1 protein and lowers the rate of cell-substratum adhesion, suggesting that it may affect the function of some small GTPase involved in the regulation of actin cytoskeleton or cell adhesion receptors. The sequence is that of Dedicator of cytokinesis protein 3 (DOCK3) from Homo sapiens (Human).